A 142-amino-acid chain; its full sequence is Thioredoxin-like protein YLS8 (142 aa).

Belongs to the DIM1 family. Expressed in roots, leaves, stems, cauline leaves and flowers.

In Arabidopsis thaliana (Mouse-ear cress), this protein is Thioredoxin-like protein YLS8 (YLS8).